Consider the following 340-residue polypeptide: Phenylalanine--tRNA ligase alpha subunit (340 aa).

Residue Glu255 coordinates Mg(2+).

The protein belongs to the class-II aminoacyl-tRNA synthetase family. Phe-tRNA synthetase alpha subunit type 1 subfamily. In terms of assembly, tetramer of two alpha and two beta subunits. Mg(2+) serves as cofactor.

Its subcellular location is the cytoplasm. It carries out the reaction tRNA(Phe) + L-phenylalanine + ATP = L-phenylalanyl-tRNA(Phe) + AMP + diphosphate + H(+). This chain is Phenylalanine--tRNA ligase alpha subunit, found in Desulfitobacterium hafniense (strain DSM 10664 / DCB-2).